The chain runs to 317 residues: Beta-ketoacyl-[acyl-carrier-protein] synthase III (317 aa).

Residues Cys112 and His244 contribute to the active site. Residues Gln245–Arg249 are ACP-binding. The active site involves Asn274.

This sequence belongs to the thiolase-like superfamily. FabH family. In terms of assembly, homodimer.

The protein resides in the cytoplasm. It catalyses the reaction malonyl-[ACP] + acetyl-CoA + H(+) = 3-oxobutanoyl-[ACP] + CO2 + CoA. Its pathway is lipid metabolism; fatty acid biosynthesis. In terms of biological role, catalyzes the condensation reaction of fatty acid synthesis by the addition to an acyl acceptor of two carbons from malonyl-ACP. Catalyzes the first condensation reaction which initiates fatty acid synthesis and may therefore play a role in governing the total rate of fatty acid production. Possesses both acetoacetyl-ACP synthase and acetyl transacylase activities. Its substrate specificity determines the biosynthesis of branched-chain and/or straight-chain of fatty acids. The protein is Beta-ketoacyl-[acyl-carrier-protein] synthase III of Serratia proteamaculans (strain 568).